Consider the following 513-residue polypeptide: Protein phosphatase 1H (513 aa).

The residue at position 7 (S7) is a Phosphoserine. The region spanning 77 to 506 (ATGYAEVINA…DDISVYVIPL (430 aa)) is the PPM-type phosphatase domain. The interval 110–133 (ITSTPNRNSKRRSSLPNGEGLQLK) is disordered. T113 bears the Phosphothreonine mark. A phosphoserine mark is found at S123 and S210. An Omega-N-methylarginine modification is found at R212. S220 carries the post-translational modification Phosphoserine. The residue at position 223 (T223) is a Phosphothreonine. The residue at position 421 (S421) is a Phosphoserine.

The protein belongs to the PP2C family.

The protein resides in the nucleus. The protein localises to the cytoplasm. The enzyme catalyses O-phospho-L-seryl-[protein] + H2O = L-seryl-[protein] + phosphate. It carries out the reaction O-phospho-L-threonyl-[protein] + H2O = L-threonyl-[protein] + phosphate. In terms of biological role, dephosphorylates CDKN1B at 'Thr-187', thus removing a signal for proteasomal degradation. In Rattus norvegicus (Rat), this protein is Protein phosphatase 1H (Ppm1h).